The sequence spans 187 residues: Ion-translocating oxidoreductase complex subunit B (187 aa).

The segment at methionine 1–alanine 26 is hydrophobic. The 59-residue stretch at glutamate 32–valine 90 folds into the 4Fe-4S domain. The [4Fe-4S] cluster site is built by cysteine 49, cysteine 52, cysteine 57, cysteine 73, cysteine 115, cysteine 118, cysteine 121, cysteine 125, cysteine 145, cysteine 148, cysteine 151, and cysteine 155. 2 4Fe-4S ferredoxin-type domains span residues lysine 106 to lysine 135 and alanine 136 to valine 165.

The protein belongs to the 4Fe4S bacterial-type ferredoxin family. RnfB subfamily. In terms of assembly, the complex is composed of six subunits: RnfA, RnfB, RnfC, RnfD, RnfE and RnfG. It depends on [4Fe-4S] cluster as a cofactor.

It is found in the cell inner membrane. Its function is as follows. Part of a membrane-bound complex that couples electron transfer with translocation of ions across the membrane. The chain is Ion-translocating oxidoreductase complex subunit B from Aeromonas hydrophila subsp. hydrophila (strain ATCC 7966 / DSM 30187 / BCRC 13018 / CCUG 14551 / JCM 1027 / KCTC 2358 / NCIMB 9240 / NCTC 8049).